Here is a 267-residue protein sequence, read N- to C-terminus: Proteasome subunit alpha (267 aa).

Residues 231–267 (ETLLQERDSKESAESEEPKESEEGKKTGKKSDADSSD) are disordered. Positions 234–267 (LQERDSKESAESEEPKESEEGKKTGKKSDADSSD) are enriched in basic and acidic residues.

This sequence belongs to the peptidase T1A family. As to quaternary structure, the 20S proteasome core is composed of 14 alpha and 14 beta subunits that assemble into four stacked heptameric rings, resulting in a barrel-shaped structure. The two inner rings, each composed of seven catalytic beta subunits, are sandwiched by two outer rings, each composed of seven alpha subunits. The catalytic chamber with the active sites is on the inside of the barrel. Has a gated structure, the ends of the cylinder being occluded by the N-termini of the alpha-subunits. Is capped by the proteasome-associated ATPase, ARC.

Its subcellular location is the cytoplasm. Its pathway is protein degradation; proteasomal Pup-dependent pathway. The formation of the proteasomal ATPase ARC-20S proteasome complex, likely via the docking of the C-termini of ARC into the intersubunit pockets in the alpha-rings, may trigger opening of the gate for substrate entry. Interconversion between the open-gate and close-gate conformations leads to a dynamic regulation of the 20S proteasome proteolysis activity. In terms of biological role, component of the proteasome core, a large protease complex with broad specificity involved in protein degradation. The protein is Proteasome subunit alpha of Mycobacterium marinum (strain ATCC BAA-535 / M).